We begin with the raw amino-acid sequence, 212 residues long: Riboflavin kinase (212 aa).

The tract at residues 1–87 (MKKSNLDLLI…HEELSDALYR (87 aa)) is H-T-H motif-like. The tract at residues 88–212 (GIIIGEVVSG…DGDRIRIKTL (125 aa)) is riboflavin kinase. Position 97 to 102 (97 to 102 (GIGEGA)) interacts with CDP. Mg(2+) contacts are provided by threonine 124 and asparagine 126. FMN-binding residues include threonine 180 and glutamate 188. Residue 193–196 (VNLR) participates in CDP binding.

This sequence belongs to the archaeal riboflavin kinase family. Requires Mg(2+) as cofactor.

It carries out the reaction riboflavin + CTP = CDP + FMN + H(+). It functions in the pathway cofactor biosynthesis; FMN biosynthesis; FMN from riboflavin (CTP route): step 1/1. Its function is as follows. Catalyzes the CTP-dependent phosphorylation of riboflavin (vitamin B2) to form flavin mononucleotide (FMN). In Pyrococcus furiosus (strain ATCC 43587 / DSM 3638 / JCM 8422 / Vc1), this protein is Riboflavin kinase (ribK).